We begin with the raw amino-acid sequence, 380 residues long: MGRRFLRGILTLPLRSVLQAQHRMLGSEQDPPAKRPRNNLMAPPRIGTHNGTFHCDEALACALLRLLPEYANAEIVRTRDPEKLASCDIVVDVGGEYNPQSHRYDHHQRTFTETMSSLCPGKPWQTKLSSAGLVYLHFGRKLLAQLLGTSEEDSVVDTIYDKMYENFVEEVDAVDNGISQWAEGEPRYAMTTTLSARVARLNPTWNQPNQDTEAGFRRAMDLVQEEFLQRLNFYQHSWLPARALVEEALAQRFKVDSSGEIVELAKGGCPWKEHLYHLESELSPKVAITFVIYTDQAGQWRVQCVPKEPHSFQSRLPLPEPWRGLRDKALDQVSGIPGCIFVHASGFIGGHHTREGALNMARATLAQRPAPVPLANAVVQ.

The transit peptide at M1–I46 directs the protein to the mitochondrion. 2 positions are modified to N6-acetyllysine: K266 and K272.

This sequence belongs to the MYG1 family. In terms of tissue distribution, ubiquitously expressed, with highest levels in testis.

Its subcellular location is the nucleus. It is found in the nucleoplasm. It localises to the mitochondrion matrix. The protein resides in the nucleolus. 3'-5' RNA exonuclease which cleaves in situ on specific transcripts in both nucleus and mitochondrion. Involved in regulating spatially segregated organellar RNA processing, acts as a coordinator of nucleo-mitochondrial crosstalk. In nucleolus, processes pre-ribosomal RNA involved in ribosome assembly and alters cytoplasmic translation. In mitochondrial matrix, processes 3'-termini of the mito-ribosomal and messenger RNAs and controls translation of mitochondrial proteins. The chain is MYG1 exonuclease from Mus musculus (Mouse).